The chain runs to 267 residues: GTP cyclohydrolase FolE2 (267 aa).

The protein belongs to the GTP cyclohydrolase IV family.

The enzyme catalyses GTP + H2O = 7,8-dihydroneopterin 3'-triphosphate + formate + H(+). Its pathway is cofactor biosynthesis; 7,8-dihydroneopterin triphosphate biosynthesis; 7,8-dihydroneopterin triphosphate from GTP: step 1/1. In terms of biological role, converts GTP to 7,8-dihydroneopterin triphosphate. This Cupriavidus necator (strain ATCC 17699 / DSM 428 / KCTC 22496 / NCIMB 10442 / H16 / Stanier 337) (Ralstonia eutropha) protein is GTP cyclohydrolase FolE2.